The sequence spans 173 residues: Nanos homolog 3 (173 aa).

The tract at residues 23–51 (KEGPETRLSPQPEPEPMLEPDQKRSLESS) is disordered. The segment at 57-111 (LCSFCKHNGESRAIYQSHVLKDEAGRVLCPILRDYVCPQCGATRERAHTRRFCPL) adopts a Nanos-type zinc-finger fold. The Zn(2+) site is built by C58, C61, H74, C85, C93, C96, H104, and C109. 2 short sequence motifs (C2HC) span residues 58–85 (CSFC…RVLC) and 93–109 (CPQC…RRFC). The segment at 123–173 (TTRNSAGKKLVRPDKAKTQDTGHRRGGGGGAGFRGAGKSEPSPSCSPSMST) is disordered. Residues 133–145 (VRPDKAKTQDTGH) show a composition bias toward basic and acidic residues. The span at 161–173 (SEPSPSCSPSMST) shows a compositional bias: low complexity.

The protein belongs to the nanos family. In terms of assembly, binds mRNA from germ cells. Interacts with PUM2. Ovary, testis and brain (at protein level). In the ovaries, expressed during multiple stages of oogenesis, including primordial, primary, secondary and antral follicles with the highest expression in the oocytes. In the testis, expressed in germ cells, type A spermatogonia (SA), primary spermatocytes (S1), round spermatids (S3) and elongated spermatids.

The protein resides in the nucleus. The protein localises to the cytoplasm. It is found in the stress granule. It localises to the P-body. Its function is as follows. Plays a role in the maintenance of the undifferentiated state of germ cells regulating the spermatogonia cell cycle and inducing a prolonged transit in G1 phase. Affects cell proliferation probably by repressing translation of specific mRNAs. Maintains the germ cell lineage by suppressing both Bax-dependent and -independent apoptotic pathways. Essential in the early stage embryo to protect the migrating primordial germ cells (PGCs) from apoptosis. The chain is Nanos homolog 3 (NANOS3) from Homo sapiens (Human).